Here is a 136-residue protein sequence, read N- to C-terminus: Large ribosomal subunit protein uL16 (136 aa).

It belongs to the universal ribosomal protein uL16 family. Part of the 50S ribosomal subunit.

Binds 23S rRNA and is also seen to make contacts with the A and possibly P site tRNAs. The polypeptide is Large ribosomal subunit protein uL16 (Ehrlichia chaffeensis (strain ATCC CRL-10679 / Arkansas)).